The sequence spans 250 residues: NAD-dependent protein deacylase (250 aa).

A Deacetylase sirtuin-type domain is found at 1–250 (MIVEVARVLA…VVHEVRRLLQ (250 aa)). 20–39 (GAGISAESGVPTFRGKDGLW) lines the NAD(+) pocket. Substrate contacts are provided by Y64 and R67. Residue 98-101 (QNVD) participates in NAD(+) binding. Residue H116 is the Proton acceptor of the active site. C124, C127, C150, and C153 together coordinate Zn(2+). NAD(+)-binding positions include 190 to 192 (GTS), 216 to 218 (NVE), and A234.

Belongs to the sirtuin family. Class III subfamily. The cofactor is Zn(2+).

It localises to the cytoplasm. The catalysed reaction is N(6)-acetyl-L-lysyl-[protein] + NAD(+) + H2O = 2''-O-acetyl-ADP-D-ribose + nicotinamide + L-lysyl-[protein]. It carries out the reaction N(6)-succinyl-L-lysyl-[protein] + NAD(+) + H2O = 2''-O-succinyl-ADP-D-ribose + nicotinamide + L-lysyl-[protein]. Functionally, NAD-dependent lysine deacetylase and desuccinylase that specifically removes acetyl and succinyl groups on target proteins. Modulates the activities of several proteins which are inactive in their acylated form. Deacetylates the N-terminal lysine residue of Alba, the major archaeal chromatin protein and that, in turn, increases Alba's DNA binding affinity, thereby repressing transcription. The protein is NAD-dependent protein deacylase of Pyrococcus abyssi (strain GE5 / Orsay).